Here is a 375-residue protein sequence, read N- to C-terminus: MSHNPVRPWRNVYRRKSRQIMVGNVPVGGDAPISVQTMTNTLTTDVAATVAQVQAAAEAGADIVRVSVPDEASARALREIVRESPVPIVADIHFHYRRGIEAAEAGAACLRINPGNIGSPDRVREVIRAARDHGCSIRIGVNAGSLEKHLLEKYGEPCPEAMVESGLEHIRILQDNDFHEYKISVKASDVFLSAAAYQGIAEATDAPIHLGITEAGGLVSGTIKSAIGLGNLLWMGIGDTIRVSLSADPVEEVKVGYEILKSLGLRHRGVNIISCPSCARQGFDVIKTVEALEKRLEHIKTPMSLSIIGCVVNGPGEALMTDVGFTGGGAGSGMVYLAGKASHKMSNERMIDHIVEEVEKKAAALDAASAAEAAE.

Cys-275, Cys-278, Cys-310, and Glu-317 together coordinate [4Fe-4S] cluster.

Belongs to the IspG family. It depends on [4Fe-4S] cluster as a cofactor.

It catalyses the reaction (2E)-4-hydroxy-3-methylbut-2-enyl diphosphate + oxidized [flavodoxin] + H2O + 2 H(+) = 2-C-methyl-D-erythritol 2,4-cyclic diphosphate + reduced [flavodoxin]. The protein operates within isoprenoid biosynthesis; isopentenyl diphosphate biosynthesis via DXP pathway; isopentenyl diphosphate from 1-deoxy-D-xylulose 5-phosphate: step 5/6. Converts 2C-methyl-D-erythritol 2,4-cyclodiphosphate (ME-2,4cPP) into 1-hydroxy-2-methyl-2-(E)-butenyl 4-diphosphate. The chain is 4-hydroxy-3-methylbut-2-en-1-yl diphosphate synthase (flavodoxin) from Ruegeria pomeroyi (strain ATCC 700808 / DSM 15171 / DSS-3) (Silicibacter pomeroyi).